A 917-amino-acid chain; its full sequence is Dolichyl-phosphooligosaccharide-protein glycotransferase (917 aa).

Positions 1–10 (MTENNEKVKN) are enriched in basic and acidic residues. Positions 1–20 (MTENNEKVKNSDSANNQSSK) are disordered. The Cytoplasmic segment spans residues 1 to 38 (MTENNEKVKNSDSANNQSSKNSKFNFNFEDKKVKCAKT). A compositionally biased stretch (low complexity) spans 11–20 (SDSANNQSSK). The helical transmembrane segment at 39-59 (ILIIIFLAFLSFQMRAQTADM) threads the bilayer. Residues 60-154 (GFTTNEQYLD…AMDSTVTLMN (95 aa)) lie on the Extracellular side of the membrane. The short motif at 82–84 (ALD) is the DXD motif 1 element. A Mn(2+)-binding site is contributed by Asp84. The chain crosses the membrane as a helical span at residues 155–175 (AAFWVPAILSMFLITPIFFTV). The Cytoplasmic portion of the chain corresponds to 176–182 (RRITSSD). A helical membrane pass occupies residues 183 to 203 (IGGAVAAILASLSPSIFVKTV). At 204–209 (AGFSDT) the chain is on the extracellular side. Residue Asp208 participates in Mn(2+) binding. The short motif at 208–210 (DTP) is the DXD motif 2 element. Residues 210 to 230 (PILEILPLLFIVWFIIEAIHY) form a helical membrane-spanning segment. At 231 to 237 (SKEKNYK) the chain is on the cytoplasmic side. The chain crosses the membrane as a helical span at residues 238-260 (SLIYGLLATLMLALYPFMWSAWW). Topologically, residues 261 to 263 (YGY) are extracellular. A helical transmembrane segment spans residues 264 to 286 (YIVIAFLVIYAIYKGISYNSIAK). The Cytoplasmic segment spans residues 287–308 (YTKSKNNNHKDKIESEKLEMLN). Residues 309-329 (ILKISGLFIIGGAVLITALYG) form a helical membrane-spanning segment. Over 330 to 372 (VSTTMNALQAPLNYLGLDEVSSQTGWPNVLTTVSELDTASLDE) the chain is Extracellular. The TIXE motif motif lies at 361–364 (TVSE). Glu364 contributes to the Mn(2+) binding site. A helical membrane pass occupies residues 373–393 (IISSSLGSIHLFAIGLIGIFL). At 394-413 (SLFRKVLTPVKQISNGLAEK) the chain is on the cytoplasmic side. The chain crosses the membrane as a helical span at residues 414-434 (LDIKYALLLIIWFAVTFLAAS). Residues 435–438 (KGVR) are Extracellular-facing. Residue Arg438 participates in a glycophospholipid binding. Residues 439–459 (FVALMVPPLSIGVGIFVGFIE) form a helical membrane-spanning segment. Residues 460 to 469 (QFIKNNLDKK) lie on the Cytoplasmic side of the membrane. A helical membrane pass occupies residues 470–490 (YEYVAYPTIAIIVLYALFTIY). At 491–506 (RADSADLVRMLLPSNY) the chain is on the extracellular side. Residues 507–527 (VPIAEGIMLASLAVLIIYKVA) traverse the membrane as a helical segment. The Cytoplasmic segment spans residues 528-541 (ELIAESNKKLVMNK). A helical transmembrane segment spans residues 542–562 (IFMILLAIGLITPTIATIVPF). Topologically, residues 563-917 (YSVPTYNDGW…FSVDYGNYSK (355 aa)) are extracellular. The segment at 592–594 (WWD) is interacts with target acceptor peptide in protein substrate. The WWDYG motif motif lies at 592–596 (WWDNG). An MI motif motif is present at residues 719–726 (MTSIASVW).

This sequence belongs to the STT3 family. Mn(2+) is required as a cofactor. It depends on Mg(2+) as a cofactor.

The protein localises to the cell membrane. The catalysed reaction is an archaeal dolichyl phosphooligosaccharide + [protein]-L-asparagine = an archaeal dolichyl phosphate + a glycoprotein with the oligosaccharide chain attached by N-beta-D-glycosyl linkage to a protein L-asparagine.. Its pathway is cell surface structure biogenesis; S-layer biogenesis. It functions in the pathway protein modification; protein glycosylation. In terms of biological role, oligosaccharyl transferase (OST) that catalyzes the initial transfer of a defined glycan (ManNAcGlc-2,3-diNAcAGlcNAc in M.voltae) from the lipid carrier dolichol-monophosphate to an asparagine residue within an Asn-X-Ser/Thr consensus motif in nascent polypeptide chains, the first step in protein N-glycosylation. Involved in the assembly of an N-linked disaccharide that decorates the S-layer glycoprotein and flagellins. This chain is Dolichyl-phosphooligosaccharide-protein glycotransferase, found in Methanococcus voltae.